The chain runs to 435 residues: MLDIKVIRENLDWAKEKLATRGIKPEQLDELVAIDAKRREAMVKCENLKAERNEVSKKIAAAKREKADASEAIANMREVGVKIKELDQEVDELQEKQEYILLRLPNFPADSDPIGPDESYNEEVRRWNEPTKFDYQPKAHWDLGTDLNILDWDAASKVSAARFVYYKGAGALLERAVYNFFLDENTSEGYTEVITPSLVNNDSMQGTGQFPKFTEDVYTIVDNDDPEVARNLTLIPTAEVPLVNYFRGDIIDGKNLPINVTALSPAFRSEAGSAGRDTRGLIRMHEFRKVEMVKVVKPEDSWKELENLTHNAEHLLQKLGLPYRVVALSTGDASFTSAKTYDLEVWMPAQDTYREISSCSNCTDFQARRAQIRYRDEDGKVKLTHTLNGSGLAVGRTVAAILENYQNEDGTVTVPEALRPYMHGMTKITPEVKWH.

237–239 (TAE) is a binding site for L-serine. 268–270 (RSE) serves as a coordination point for ATP. Glutamate 291 contributes to the L-serine binding site. Position 355–358 (355–358 (EISS)) interacts with ATP. Serine 390 serves as a coordination point for L-serine.

This sequence belongs to the class-II aminoacyl-tRNA synthetase family. Type-1 seryl-tRNA synthetase subfamily. As to quaternary structure, homodimer. The tRNA molecule binds across the dimer.

It is found in the cytoplasm. It catalyses the reaction tRNA(Ser) + L-serine + ATP = L-seryl-tRNA(Ser) + AMP + diphosphate + H(+). The enzyme catalyses tRNA(Sec) + L-serine + ATP = L-seryl-tRNA(Sec) + AMP + diphosphate + H(+). Its pathway is aminoacyl-tRNA biosynthesis; selenocysteinyl-tRNA(Sec) biosynthesis; L-seryl-tRNA(Sec) from L-serine and tRNA(Sec): step 1/1. Its function is as follows. Catalyzes the attachment of serine to tRNA(Ser). Is also able to aminoacylate tRNA(Sec) with serine, to form the misacylated tRNA L-seryl-tRNA(Sec), which will be further converted into selenocysteinyl-tRNA(Sec). The sequence is that of Serine--tRNA ligase from Lactobacillus delbrueckii subsp. bulgaricus (strain ATCC BAA-365 / Lb-18).